Reading from the N-terminus, the 291-residue chain is F-box/kelch-repeat protein At5g38670 (291 aa).

The 47-residue stretch at 5-51 (TNPNPSLPDDLILSCVARVSRLYYPALSLVSKSFRSLIASPELYKTR) folds into the F-box domain. Kelch repeat units lie at residues 46-91 (ELYK…VLDE), 92-140 (KIYV…RFDG), 142-187 (LHLV…WYTI), and 189-232 (KGDI…YGGK).

The protein is F-box/kelch-repeat protein At5g38670 of Arabidopsis thaliana (Mouse-ear cress).